The chain runs to 228 residues: 6-carboxyhexanoate--CoA ligase (228 aa).

Belongs to the BioW family. Homodimer. Mg(2+) serves as cofactor.

The catalysed reaction is heptanedioate + ATP + CoA = 6-carboxyhexanoyl-CoA + AMP + diphosphate. Its pathway is metabolic intermediate metabolism; pimeloyl-CoA biosynthesis; pimeloyl-CoA from pimelate: step 1/1. Catalyzes the transformation of pimelate into pimeloyl-CoA with concomitant hydrolysis of ATP to AMP. The sequence is that of 6-carboxyhexanoate--CoA ligase from Staphylococcus epidermidis (strain ATCC 35984 / DSM 28319 / BCRC 17069 / CCUG 31568 / BM 3577 / RP62A).